The primary structure comprises 516 residues: Glutamyl-tRNA(Gln) amidotransferase subunit B, mitochondrial (516 aa).

Belongs to the GatB/GatE family. GatB subfamily. As to quaternary structure, subunit of the heterotrimeric GatCAB amidotransferase (AdT) complex, composed of A, B and C subunits.

It is found in the mitochondrion. It catalyses the reaction L-glutamyl-tRNA(Gln) + L-glutamine + ATP + H2O = L-glutaminyl-tRNA(Gln) + L-glutamate + ADP + phosphate + H(+). Its function is as follows. Allows the formation of correctly charged Gln-tRNA(Gln) through the transamidation of misacylated Glu-tRNA(Gln) in the mitochondria. The reaction takes place in the presence of glutamine and ATP through an activated gamma-phospho-Glu-tRNA(Gln). The polypeptide is Glutamyl-tRNA(Gln) amidotransferase subunit B, mitochondrial (Drosophila melanogaster (Fruit fly)).